Here is a 131-residue protein sequence, read N- to C-terminus: MAKTTKGKTPRRARRNISAGRAYVHASYNNTIVTITDLDGNSVAWSSGGTIGYKGSKKGTPYAAQLAAADAVKKAQQAFGMNVVDVIVRGTGSGREQAIRAIQASGIEVKSIMDDSPVPHNGCRPKKKFRA.

The protein belongs to the universal ribosomal protein uS11 family. Part of the 30S ribosomal subunit. Interacts with proteins S7 and S18. Binds to IF-3.

In terms of biological role, located on the platform of the 30S subunit, it bridges several disparate RNA helices of the 16S rRNA. Forms part of the Shine-Dalgarno cleft in the 70S ribosome. This is Small ribosomal subunit protein uS11 from Deinococcus geothermalis (strain DSM 11300 / CIP 105573 / AG-3a).